The following is a 248-amino-acid chain: Allergin-1 (248 aa).

The signal sequence occupies residues Met1–Ser33. Over Ile34 to Ser150 the chain is Extracellular. Positions Pro54–Thr137 constitute an Ig-like C2-type domain. An N-linked (GlcNAc...) asparagine glycan is attached at Asn68. The cysteines at positions 73 and 120 are disulfide-linked. Asn135 carries N-linked (GlcNAc...) asparagine glycosylation. The chain crosses the membrane as a helical span at residues Leu151 to Leu171. The Cytoplasmic segment spans residues Lys172–Tyr248. 2 short sequence motifs (ITIM motif) span residues Ile216–Pro221 and Tyr241–Leu246. 2 positions are modified to phosphotyrosine: Tyr218 and Tyr243.

Monomer. Interacts (tyrosine-phosphorylated) with PTPN6, PTPN11 and INPP5D. In terms of processing, N-glycosylated. As to expression, mast cell-specific. Expressed in primary and transformed mast cells.

The protein resides in the cell membrane. Immunoglobulin-like receptor which plays an inhibitory role in degranulation of mast cells. Negatively regulates IgE-mediated mast cell activation and suppresses the type I immediate hypersensitivity reaction. The polypeptide is Allergin-1 (Milr1) (Rattus norvegicus (Rat)).